A 327-amino-acid chain; its full sequence is Type II methyltransferase M.HhaI (327 aa).

One can recognise an SAM-dependent MTase C5-type domain in the interval leucine 12–lysine 325. The active site involves cysteine 81.

Belongs to the class I-like SAM-binding methyltransferase superfamily. C5-methyltransferase family. In terms of assembly, monomer.

The enzyme catalyses a 2'-deoxycytidine in DNA + S-adenosyl-L-methionine = a 5-methyl-2'-deoxycytidine in DNA + S-adenosyl-L-homocysteine + H(+). In terms of biological role, a methylase, recognizes the double-stranded sequence 5'-GCGC-3', methylates C-2 on both strands, and protects the DNA from cleavage by the HhaI endonuclease. This is Type II methyltransferase M.HhaI (hhaIM) from Haemophilus parahaemolyticus.